The primary structure comprises 154 residues: MAKQEQNIVYLYCDGACRGNPGPGGWGVLLRYNQHERQLHGGVANTTNNQMELTAAIEGLKSLKKPCQVVVTTDSQYLRRGITEWLPVWKRRGWRTSNKKPVKNQPLWETLEREVERHTIVWHWVKGHSGHAENEIADELANRGIDEVLKRGAR.

Residues 5–146 (EQNIVYLYCD…ADELANRGID (142 aa)) form the RNase H type-1 domain. The Mg(2+) site is built by D14, E52, D74, and D138.

Belongs to the RNase H family. In terms of assembly, monomer. Mg(2+) serves as cofactor.

It is found in the cytoplasm. The enzyme catalyses Endonucleolytic cleavage to 5'-phosphomonoester.. Functionally, endonuclease that specifically degrades the RNA of RNA-DNA hybrids. The protein is Ribonuclease H of Coxiella burnetii (strain CbuK_Q154) (Coxiella burnetii (strain Q154)).